The following is a 175-amino-acid chain: tRNA (cytidine(56)-2'-O)-methyltransferase (175 aa).

Leu83 is a binding site for S-adenosyl-L-methionine.

Belongs to the aTrm56 family. As to quaternary structure, homodimer.

The protein resides in the cytoplasm. The enzyme catalyses cytidine(56) in tRNA + S-adenosyl-L-methionine = 2'-O-methylcytidine(56) in tRNA + S-adenosyl-L-homocysteine + H(+). Specifically catalyzes the AdoMet-dependent 2'-O-ribose methylation of cytidine at position 56 in tRNAs. The polypeptide is tRNA (cytidine(56)-2'-O)-methyltransferase (Methanosphaera stadtmanae (strain ATCC 43021 / DSM 3091 / JCM 11832 / MCB-3)).